Reading from the N-terminus, the 239-residue chain is 1-(5-phosphoribosyl)-5-[(5-phosphoribosylamino)methylideneamino] imidazole-4-carboxamide isomerase (239 aa).

Asp8 acts as the Proton acceptor in catalysis. Residue Asp129 is the Proton donor of the active site.

Belongs to the HisA/HisF family.

The protein localises to the cytoplasm. The catalysed reaction is 1-(5-phospho-beta-D-ribosyl)-5-[(5-phospho-beta-D-ribosylamino)methylideneamino]imidazole-4-carboxamide = 5-[(5-phospho-1-deoxy-D-ribulos-1-ylimino)methylamino]-1-(5-phospho-beta-D-ribosyl)imidazole-4-carboxamide. It functions in the pathway amino-acid biosynthesis; L-histidine biosynthesis; L-histidine from 5-phospho-alpha-D-ribose 1-diphosphate: step 4/9. The sequence is that of 1-(5-phosphoribosyl)-5-[(5-phosphoribosylamino)methylideneamino] imidazole-4-carboxamide isomerase from Bacillus cereus (strain AH820).